Reading from the N-terminus, the 83-residue chain is Small ribosomal subunit protein bS18 (83 aa).

This sequence belongs to the bacterial ribosomal protein bS18 family. In terms of assembly, part of the 30S ribosomal subunit. Forms a tight heterodimer with protein bS6.

Its function is as follows. Binds as a heterodimer with protein bS6 to the central domain of the 16S rRNA, where it helps stabilize the platform of the 30S subunit. This Methylobacterium radiotolerans (strain ATCC 27329 / DSM 1819 / JCM 2831 / NBRC 15690 / NCIMB 10815 / 0-1) protein is Small ribosomal subunit protein bS18.